Consider the following 202-residue polypeptide: Probable host range protein 2-2 (202 aa).

It belongs to the poxviridae C7 protein family.

In terms of biological role, plays a role for multiplication of the virus in different cell types. This chain is Probable host range protein 2-2, found in Oryctolagus cuniculus (Rabbit).